The primary structure comprises 317 residues: Ribosomal RNA small subunit methyltransferase H (317 aa).

S-adenosyl-L-methionine contacts are provided by residues Gly-34–His-36, Asp-53, Phe-80, Asp-98, and Gln-105.

This sequence belongs to the methyltransferase superfamily. RsmH family.

It is found in the cytoplasm. The catalysed reaction is cytidine(1402) in 16S rRNA + S-adenosyl-L-methionine = N(4)-methylcytidine(1402) in 16S rRNA + S-adenosyl-L-homocysteine + H(+). Functionally, specifically methylates the N4 position of cytidine in position 1402 (C1402) of 16S rRNA. In Tropheryma whipplei (strain TW08/27) (Whipple's bacillus), this protein is Ribosomal RNA small subunit methyltransferase H.